We begin with the raw amino-acid sequence, 95 residues long: Trypomastigote decay-accelerating factor (95 aa).

It belongs to the receptors of complement activation (RCA) family.

Interferes with the efficient assembly of the host C3 convertase. Could protect parasites from complement-mediated lysis by sera from a number of different species. The chain is Trypomastigote decay-accelerating factor from Trypanosoma cruzi.